The primary structure comprises 377 residues: Required for respiratory growth protein 1, mitochondrial (377 aa).

It belongs to the RRG1 family.

Its subcellular location is the mitochondrion. In terms of biological role, essential for respiratory growth and required for mitochondrial protein synthesis. Required for vacuolar acidification. The chain is Required for respiratory growth protein 1, mitochondrial (RRG1) from Candida glabrata (strain ATCC 2001 / BCRC 20586 / JCM 3761 / NBRC 0622 / NRRL Y-65 / CBS 138) (Yeast).